We begin with the raw amino-acid sequence, 303 residues long: Bifunctional protein FolD (303 aa).

NADP(+)-binding positions include G165–S167, S190, and I231.

Belongs to the tetrahydrofolate dehydrogenase/cyclohydrolase family. Homodimer.

The enzyme catalyses (6R)-5,10-methylene-5,6,7,8-tetrahydrofolate + NADP(+) = (6R)-5,10-methenyltetrahydrofolate + NADPH. It catalyses the reaction (6R)-5,10-methenyltetrahydrofolate + H2O = (6R)-10-formyltetrahydrofolate + H(+). It functions in the pathway one-carbon metabolism; tetrahydrofolate interconversion. Functionally, catalyzes the oxidation of 5,10-methylenetetrahydrofolate to 5,10-methenyltetrahydrofolate and then the hydrolysis of 5,10-methenyltetrahydrofolate to 10-formyltetrahydrofolate. In Prochlorococcus marinus (strain NATL1A), this protein is Bifunctional protein FolD.